Here is a 196-residue protein sequence, read N- to C-terminus: Protein LURP-one-related 8 (196 aa).

This sequence belongs to the LOR family.

In terms of biological role, might be related to the phospholipid scramblase and tubby-like superfamily of membrane tethered transcription factors. This is Protein LURP-one-related 8 from Arabidopsis thaliana (Mouse-ear cress).